The sequence spans 713 residues: Zinc finger and BTB domain-containing protein 1 (713 aa).

K3 is covalently cross-linked (Glycyl lysine isopeptide (Lys-Gly) (interchain with G-Cter in SUMO2)). Residues 24–91 (CDCCIAIDDI…MYLGKIMTAP (68 aa)) enclose the BTB domain. Glycyl lysine isopeptide (Lys-Gly) (interchain with G-Cter in SUMO2) cross-links involve residues K200 and K205. A C2H2-type 1; atypical zinc finger spans residues 216–242 (FTCDSCGFGFSCEKLLDEHVLTCTNRH). Glycyl lysine isopeptide (Lys-Gly) (interchain with G-Cter in SUMO2) cross-links involve residues K261, K266, K276, K284, K304, K316, K328, K340, and K346. Residues 270–319 (AEKDSSKTFSAQPDKYREDANQAPDDSASTTGSRKSTVEAGIAGEEKSRA) are disordered. S355 bears the Phosphoserine mark. T356 is subject to Phosphothreonine. Residue K381 forms a Glycyl lysine isopeptide (Lys-Gly) (interchain with G-Cter in SUMO2) linkage. A C2H2-type 2; atypical zinc finger spans residues 448–470 (CACGKCGQILVKGRQLQEHAQRC). A Glycyl lysine isopeptide (Lys-Gly) (interchain with G-Cter in SUMO2) cross-link involves residue K528. The UBZ-type zinc finger occupies 533 to 558 (PFRCPNCGQRFETENLVVEHMSSCLD). K563 participates in a covalent cross-link: Glycyl lysine isopeptide (Lys-Gly) (interchain with G-Cter in SUMO2). 5 C2H2-type zinc fingers span residues 578–600 (HFCN…YTVH), 606–628 (FVCQ…NDMH), 634–656 (YVCS…MISH), 662–684 (TICQ…MDVH), and 686–709 (YTCG…NAKH).

Homodimer. Homodimer. Interacts (via BTB domain) with TRIM28 (unphosphorylated or phosphorylated form). Sumoylated with SUMO2 at Lys-328 and to a lesser extent at Lys-266. Sumoylation inhibits its transcriptional repression activity and regulates its subcellular localization. As to expression, expressed strongly in thymus and spleen, less in lymph nodes and peripheral blood mononuclear cells (PBMCs) and weakly in bone marrow. Strongly expressed in immature, but weakly in mature bone marrow-lymphocyte B.

The protein localises to the nucleus. It localises to the nucleoplasm. Acts as a transcriptional repressor. Represses cAMP-responsive element (CRE)-mediated transcriptional activation. In addition, has a role in translesion DNA synthesis. Requires for UV-inducible RAD18 loading, PCNA monoubiquitination, POLH recruitment to replication factories and efficient translesion DNA synthesis. Plays a key role in the transcriptional regulation of T lymphocyte development. The sequence is that of Zinc finger and BTB domain-containing protein 1 (Zbtb1) from Mus musculus (Mouse).